Here is a 395-residue protein sequence, read N- to C-terminus: Probable alcohol dehydrogenase EutG (395 aa).

NAD(+) contacts are provided by residues Asp57, 116–120 (GSVLD), 156–160 (TTAGT), Lys178, and 197–201 (VTEGV). Fe cation-binding residues include Asp212, His216, His281, and His295. Residues His295 and Asp354 each contribute to the NAD(+) site.

This sequence belongs to the iron-containing alcohol dehydrogenase family. The cofactor is Fe cation.

It is found in the bacterial microcompartment. It carries out the reaction ethanol + NAD(+) = acetaldehyde + NADH + H(+). Its pathway is amine and polyamine degradation; ethanolamine degradation. In terms of biological role, probably acts on the acetaldehyde produced by the degradation of ethanolamine, producing ethanol. Its function is as follows. Expression of the eut operon allows this bacteria to use ethanolamine (EA) as a carbon, nitrogen and energy source. It relies on cobalamin (vitamin B12) both as a cofactor for the ethanolamine ammonia-lyase (EAL) activity and to induce the operon. EA enhances bacterial survival in macrophages in a concentration-dependent manner, suggesting it is an important nutrient during infection. This Salmonella typhimurium (strain LT2 / SGSC1412 / ATCC 700720) protein is Probable alcohol dehydrogenase EutG.